The sequence spans 435 residues: Serine/threonine-protein kinase 40 (435 aa).

The Protein kinase domain occupies 35–332; sequence FILGPRLGNS…DVLEALSAII (298 aa). Residues 41–49 and Lys66 contribute to the ATP site; that span reads LGNSPVPSI. Asp197 serves as the catalytic Proton acceptor.

The protein belongs to the protein kinase superfamily. CAMK Ser/Thr protein kinase family.

The protein localises to the nucleus. It is found in the cytoplasm. It carries out the reaction L-seryl-[protein] + ATP = O-phospho-L-seryl-[protein] + ADP + H(+). The enzyme catalyses L-threonyl-[protein] + ATP = O-phospho-L-threonyl-[protein] + ADP + H(+). May be a negative regulator of NF-kappa-B and p53-mediated gene transcription. The chain is Serine/threonine-protein kinase 40 (Stk40) from Rattus norvegicus (Rat).